Consider the following 276-residue polypeptide: NH(3)-dependent NAD(+) synthetase (276 aa).

43 to 50 (GISGGVDS) is a binding site for ATP. A Mg(2+)-binding site is contributed by D49. Position 146 (R146) interacts with deamido-NAD(+). Position 166 (T166) interacts with ATP. E171 is a Mg(2+) binding site. Residues K179 and D186 each contribute to the deamido-NAD(+) site. ATP is bound by residues K195 and T217. Position 266 to 267 (266 to 267 (HK)) interacts with deamido-NAD(+).

This sequence belongs to the NAD synthetase family. Homodimer.

It carries out the reaction deamido-NAD(+) + NH4(+) + ATP = AMP + diphosphate + NAD(+) + H(+). It functions in the pathway cofactor biosynthesis; NAD(+) biosynthesis; NAD(+) from deamido-NAD(+) (ammonia route): step 1/1. Its function is as follows. Catalyzes the ATP-dependent amidation of deamido-NAD to form NAD. Uses ammonia as a nitrogen source. The polypeptide is NH(3)-dependent NAD(+) synthetase (Shewanella woodyi (strain ATCC 51908 / MS32)).